The chain runs to 985 residues: MMKYIYILLIFSLLFLKINSQNTILLNALIYDQTPSRNNDFQIPSPGGIAKGLVKSNLGSDNTPVLVAERSSTIHSPETFNQWFHNYPGVNLPINYQITLTQSTTNPNVYAYTNDAFFPIDGQGFDNKTNYPYEAVYRDERGTPHNFHFCLQIHSMFAYKKGDTFYFNGDDDVWVFMNKILVVDLGGIHGKATTSINLDRLGLTEGTNYPFDFFYCERHTTESHISIETSIELTCPGYDECGVCQGDGSSCCTKSNCNDNPNNKLNCITAQCSNNVCVKSAPSCPSINPCEAGTCIPNFGCSYSEITCNRTNCENSFCNKDTNTCERSPIANCVSCSNGPCITTDLCFPQKCDSKGNCVSSNKNCDDRDYCTTDTCQDGICIHTPIPKCVNCAGTGCITTNDCNPKVCAPDGKSCLTEVLCNDNKTCTKDFCFAGHCLFIPIDCDDVDDCTVDTCDETLGCVHTPLDNCIACTGLACITTDLCNQKLCTDNGTKCTEVPKVCDDGNACSNDRCISPNGTCAHEILQNCTDCGTFNCITLDLCSPLSCPTDGSTTCVSIPKTCNDNKPCTLNQCHSPDGICTAVPIENCVKCNQTNRGCLTVDFCNPVECSENGDSCIITNRTCNDYNYCTTDSCINGQCYNEIIQNCENCTNGIGCTTTDFCFQQICSDSGDTCKTVPLDCNDGLSCTTETCLGPNGTCTHTIIKNCIECGIEPCITENLCLPVVCGPDGSCLYNYTESTCDDNDACTSDVCTEYGCEHYTYTGCMNCTNGGCFTTPDTCNHYGCNFTGDGKCFFTHLECDDNDPCTKDHCLYSGDCYYEKLTNCTTPTPTQTPPPTQTPTNHSIGVNECDCCPEGQYCLLIFGHERCFIANDGGDGIPEETIGCPGVTTGTPTSTDGGTGHYTESGTGNPHLCDRHHCRSGMECHVINGIPECLPSKYKCLDCLDLHCEKQGGKTCFTIENQNYKPNIKGCKDDSCCKYTPTCR.

An N-terminal signal peptide occupies residues 1-20 (MMKYIYILLIFSLLFLKINS). The PA14 domain occupies 102–247 (QSTTNPNVYA…YDECGVCQGD (146 aa)). N-linked (GlcNAc...) asparagine glycosylation is found at asparagine 127, asparagine 309, asparagine 424, asparagine 491, asparagine 517, asparagine 527, asparagine 592, asparagine 620, asparagine 649, asparagine 696, asparagine 735, asparagine 767, asparagine 786, asparagine 824, and asparagine 842.

It belongs to the prespore-cell-inducing factor family.

The protein resides in the secreted. The protein is Protein psiQ (psiQ) of Dictyostelium discoideum (Social amoeba).